The chain runs to 386 residues: S-adenosylmethionine synthase (386 aa).

Position 16 (His-16) interacts with ATP. Asp-18 contributes to the Mg(2+) binding site. Glu-44 lines the K(+) pocket. L-methionine contacts are provided by Glu-57 and Gln-100. A flexible loop region spans residues 100-110 (QSPDINVGVDQ). ATP is bound by residues 164–166 (DGK), 231–232 (RF), Asp-240, 246–247 (RK), Ala-263, and Lys-267. An L-methionine-binding site is contributed by Asp-240. Lys-271 contacts L-methionine.

The protein belongs to the AdoMet synthase family. In terms of assembly, homotetramer; dimer of dimers. It depends on Mg(2+) as a cofactor. The cofactor is K(+).

It localises to the cytoplasm. The catalysed reaction is L-methionine + ATP + H2O = S-adenosyl-L-methionine + phosphate + diphosphate. The protein operates within amino-acid biosynthesis; S-adenosyl-L-methionine biosynthesis; S-adenosyl-L-methionine from L-methionine: step 1/1. In terms of biological role, catalyzes the formation of S-adenosylmethionine (AdoMet) from methionine and ATP. The overall synthetic reaction is composed of two sequential steps, AdoMet formation and the subsequent tripolyphosphate hydrolysis which occurs prior to release of AdoMet from the enzyme. This chain is S-adenosylmethionine synthase, found in Sulfurovum sp. (strain NBC37-1).